We begin with the raw amino-acid sequence, 266 residues long: Thymidylate synthase (266 aa).

R24 provides a ligand contact to dUMP. A (6R)-5,10-methylene-5,6,7,8-tetrahydrofolate-binding site is contributed by H54. 129–130 provides a ligand contact to dUMP; the sequence is RR. C149 acts as the Nucleophile in catalysis. DUMP-binding positions include 169–172, N180, and 210–212; these read RSAD and HIY. Position 172 (D172) interacts with (6R)-5,10-methylene-5,6,7,8-tetrahydrofolate. A265 contributes to the (6R)-5,10-methylene-5,6,7,8-tetrahydrofolate binding site.

Belongs to the thymidylate synthase family. Bacterial-type ThyA subfamily. As to quaternary structure, homodimer.

It is found in the cytoplasm. It carries out the reaction dUMP + (6R)-5,10-methylene-5,6,7,8-tetrahydrofolate = 7,8-dihydrofolate + dTMP. Its pathway is pyrimidine metabolism; dTTP biosynthesis. Catalyzes the reductive methylation of 2'-deoxyuridine-5'-monophosphate (dUMP) to 2'-deoxythymidine-5'-monophosphate (dTMP) while utilizing 5,10-methylenetetrahydrofolate (mTHF) as the methyl donor and reductant in the reaction, yielding dihydrofolate (DHF) as a by-product. This enzymatic reaction provides an intracellular de novo source of dTMP, an essential precursor for DNA biosynthesis. The protein is Thymidylate synthase of Mycobacterium ulcerans (strain Agy99).